The chain runs to 102 residues: Neuropeptide F (102 aa).

An N-terminal signal peptide occupies residues 1–26 (MCQTMRCILVACVALALLAAGCRVEA). Positions 27-32 (SNSRPP) are excised as a propeptide. F62 carries the post-translational modification Phenylalanine amide. The propeptide occupies 66–102 (GSLMDILRNHEMDNINLGKNANNGGEFARGFNEEEIF).

This sequence belongs to the NPY family. As to expression, expressed in midgut, brain lobes and ventral nerve cord of larvae. Predominantly expressed in two pairs of protocerebral neurons in the larval CNS (at protein level). Intense expression is also seen in the fan-shaped body of the central complex and two lateral areas of the lower part of the central brain that appear to harbor the giant commissural interneurons of the giant fiber pathway (at protein level). Upon glucose feeding, two additional dNPFergic neurons are consistently detected on the ventromedial surface of the subesophageal ganglion (SEG) of third instars larvae. Expressed in a subset of sugar-responsive PAIN neurons in the thoracic body but is absent from other peripheral PAIN neurons.

It is found in the secreted. Integral part of the sensory system that mediates food signaling, providing the neural basis for the regulation of food response; coordinates larval foraging and social behavior changes during development. Required in dopaminergic (DA) neurons that innervate the mushroom body for satiety to suppress appetitive memory performance; a key factor in the internal state of hunger in the brain. NPF neurons coordinately modulate diverse sensory and motor neurons important for feeding, flight, and locomotion. NPF/NPFR pathway exerts its suppressive effect on larval aversion to diverse stressful stimuli (chemical stress and noxious heat) through attenuation of TRP channel-induced neuronal excitation. NPF neural signaling system plays a physiological role in acute modulation of alcohol sensitivity in adults, rather than a general response to intoxication by sedative agents. Activation and inhibition of the NPF system reduces and enhances ethanol preference, respectively. Sexual experience, the NPF system activity and ethanol consumption are all linked; sexual deprivation is a major contributor to enhanced ethanol preference. The chain is Neuropeptide F (NPF) from Drosophila melanogaster (Fruit fly).